A 107-amino-acid polypeptide reads, in one-letter code: Replication restart protein PriB (107 aa).

Residues 8 to 107 form the SSB domain; the sequence is IENRLSLIGV…LHAEHIELLD (100 aa).

The protein belongs to the PriB family. In terms of assembly, homodimer. Interacts with PriA and DnaT. Component of the replication restart primosome. Primosome assembly occurs via a 'hand-off' mechanism. PriA binds to replication forks, subsequently PriB then DnaT bind; DnaT then displaces ssDNA to generate the helicase loading substrate.

Involved in the restart of stalled replication forks, which reloads the replicative helicase on sites other than the origin of replication; the PriA-PriB pathway is the major replication restart pathway. During primosome assembly it facilitates complex formation between PriA and DnaT on DNA; stabilizes PriA on DNA. Stimulates the DNA unwinding activity of PriA helicase. This chain is Replication restart protein PriB, found in Actinobacillus succinogenes (strain ATCC 55618 / DSM 22257 / CCUG 43843 / 130Z).